A 462-amino-acid polypeptide reads, in one-letter code: Threonine--tRNA ligase, mitochondrial (462 aa).

The N-terminal 45 residues, 1-45 (MKIQLVRWHCSRNALWNRAFYSTRKATKNASSATPATMTSMVSQR), are a transit peptide targeting the mitochondrion.

This sequence belongs to the class-II aminoacyl-tRNA synthetase family.

Its subcellular location is the mitochondrion matrix. The enzyme catalyses tRNA(Thr) + L-threonine + ATP = L-threonyl-tRNA(Thr) + AMP + diphosphate + H(+). This Saccharomyces cerevisiae (strain ATCC 204508 / S288c) (Baker's yeast) protein is Threonine--tRNA ligase, mitochondrial (MST1).